The chain runs to 100 residues: Small ribosomal subunit protein uS14 (100 aa).

The protein belongs to the universal ribosomal protein uS14 family. In terms of assembly, part of the 30S ribosomal subunit. Contacts proteins S3 and S10.

Functionally, binds 16S rRNA, required for the assembly of 30S particles and may also be responsible for determining the conformation of the 16S rRNA at the A site. This Microcystis aeruginosa (strain NIES-843 / IAM M-2473) protein is Small ribosomal subunit protein uS14.